A 504-amino-acid polypeptide reads, in one-letter code: Cytochrome P450 2K1 (504 aa).

C447 is a heme binding site.

The protein belongs to the cytochrome P450 family. The cofactor is heme.

The protein resides in the endoplasmic reticulum membrane. It localises to the microsome membrane. The enzyme catalyses an organic molecule + reduced [NADPH--hemoprotein reductase] + O2 = an alcohol + oxidized [NADPH--hemoprotein reductase] + H2O + H(+). This Oncorhynchus mykiss (Rainbow trout) protein is Cytochrome P450 2K1 (cyp2k1).